Here is a 204-residue protein sequence, read N- to C-terminus: Casparian strip membrane protein 3 (204 aa).

Residues 1 to 41 are Cytoplasmic-facing; the sequence is MKNESTFIDVPADSSSAMKGKAPLIGVAKDHTASGSGGYNR. A helical membrane pass occupies residues 42 to 62; it reads GLSIFDFLLRLAAIVAASVAA. At 63-92 the chain is on the extracellular side; that stretch reads GTMFTSDETLPFFTQFLQFQAGYDDLPTFQ. Residues 93–113 form a helical membrane-spanning segment; the sequence is FFVISMSLVSGYIVLSLPISV. At 114-125 the chain is on the cytoplasmic side; it reads VTIVRPLAAAPR. Residues 126-146 form a helical membrane-spanning segment; it reads LLLLVLDTAVMGLTMAAASSA. The Extracellular portion of the chain corresponds to 147-204; it reads AAISYVAHNGNQNTNWLPICQQFGDFCQKTSGGCGLFLCRRRVFHDPGCPLRSRSQRH.

It belongs to the Casparian strip membrane proteins (CASP) family. In terms of assembly, homodimer and heterodimers.

It is found in the cell membrane. Functionally, regulates membrane-cell wall junctions and localized cell wall deposition. Required for establishment of the Casparian strip membrane domain (CSD) and the subsequent formation of Casparian strips, a cell wall modification of the root endodermis that determines an apoplastic barrier between the intraorganismal apoplasm and the extraorganismal apoplasm and prevents lateral diffusion. The polypeptide is Casparian strip membrane protein 3 (Raphanus sativus (Radish)).